Consider the following 298-residue polypeptide: Ribosomal protein L11 methyltransferase (298 aa).

Residues T152, G173, D195, and N234 each coordinate S-adenosyl-L-methionine.

The protein belongs to the methyltransferase superfamily. PrmA family.

Its subcellular location is the cytoplasm. The catalysed reaction is L-lysyl-[protein] + 3 S-adenosyl-L-methionine = N(6),N(6),N(6)-trimethyl-L-lysyl-[protein] + 3 S-adenosyl-L-homocysteine + 3 H(+). In terms of biological role, methylates ribosomal protein L11. In Ralstonia pickettii (strain 12J), this protein is Ribosomal protein L11 methyltransferase.